The primary structure comprises 299 residues: Ent-kaurene oxidase-like protein 1 (299 aa).

The chain crosses the membrane as a helical span at residues 16–36 (AVVGVFVAAAVVGGFVAAVAL).

It belongs to the cytochrome P450 family. As to expression, expressed in roots and panicles.

It localises to the membrane. This is Ent-kaurene oxidase-like protein 1 from Oryza sativa subsp. japonica (Rice).